The sequence spans 394 residues: QWRF motif-containing protein 7 (394 aa).

The disordered stretch occupies residues 1–171 (MATTGRRLRP…ESPVSKAKIR (171 aa)). Residues 14–67 (NNNRSRTISSSISLPVSLNASLSSSTSSSSSSSPSNSSKRVMITRSQSTTRSSR) show a composition bias toward low complexity. A compositionally biased stretch (polar residues) spans 85–96 (NSASRSQEINNG). Basic and acidic residues predominate over residues 97–110 (RSRESFARYLEQRT). Composition is skewed to polar residues over residues 111–120 (RGSPRSNASS) and 142–157 (TMKT…TSMC). The QWRF motif motif lies at 211-214 (QWRF).

It belongs to the QWRF family.

This is QWRF motif-containing protein 7 (QWRF7) from Arabidopsis thaliana (Mouse-ear cress).